The chain runs to 309 residues: Serine/threonine-protein phosphatase 2A catalytic subunit alpha isoform (309 aa).

Mn(2+) is bound by residues Asp57, His59, Asp85, and Asn117. Residues Asp57, His59, and Asp85 each contribute to the Zn(2+) site. Residues Asp85 and Asn117 each contribute to the Fe(3+) site. His118 functions as the Proton donor in the catalytic mechanism. Mn(2+) is bound by residues His167 and His241. Positions 167 and 241 each coordinate Fe(3+). Position 307 is a phosphotyrosine (Tyr307). The residue at position 309 (Leu309) is a Leucine methyl ester.

Belongs to the PPP phosphatase family. PP-1 subfamily. In terms of assembly, PP2A consists of a common heterodimeric core enzyme composed of PPP2CA, a 36 kDa catalytic subunit (subunit C), and PPP2R1A, a 65 kDa constant regulatory subunit (PR65 or subunit A), that associates with a variety of regulatory subunits. Proteins that associate with the core dimer include three families of regulatory subunits B (the R2/B/PR55/B55, R3/B''/PR72/PR130/PR59 and R5/B'/B56 families), the 48 kDa variable regulatory subunit, viral proteins, and cell signaling molecules. Interacts with the PP2A A subunit PPP2R1A. Interacts with the regulatory subunit PPP2R2A. Interacts (via C-terminus) with PTPA. Interacts with NXN; the interaction is direct. Interacts with KCTD20. Interacts with BTBD10. Interacts with SGO1 and SGO2. Interacts with RAF1. Interaction with IGBP1 protects unassembled PPP2CA from degradative ubiquitination. Interacts with GSK3B (via C2 domain). Interacts with MFHAS1; retains PPP2CA into the cytoplasm and excludes it from the nucleus. Interacts with PABIR1/FAM122A. Interacts with ADCY8; interaction is phosphatase activity-dependent; antagonizes interaction between ADCY8 and calmodulin. Interacts with CRTC3 (when phosphorylated at 'Ser-391'). Interacts with SPRY2; the interaction is inhibited by TESK1 interaction with SPRY2, possibly by vesicular sequestration of SPRY2. Interacts with TRAF3IP3. Interacts with AMBRA1 (via PxP motifs); enhancing interaction between PPP2CA and MYC or FOXO3. Forms a complex with AMBRA1 and BECN1; AMBRA1 and BECN1 components of the complex regulate MYC stability via different pathways. Part of the core of STRIPAK complexes composed of PP2A catalytic and scaffolding subunits, the striatins (PP2A regulatory subunits), the striatin-associated proteins MOB4, STRIP1 and STRIP2, PDCD10 and members of the STE20 kinases, such as STK24 and STK26. Phosphatase component of the Integrator-PP2A (INTAC) complex, composed of the Integrator core complex and protein phosphatase 2A subunits PPP2CA and PPP2R1A. The cofactor is Mn(2+). It depends on Fe(3+) as a cofactor. Requires Zn(2+) as cofactor. In terms of processing, reversibly methyl esterified on Leu-309 by leucine carboxyl methyltransferase 1 (LCMT1) and protein phosphatase methylesterase 1 (PPME1). Carboxyl methylation influences the affinity of the catalytic subunit for the different regulatory subunits, thereby modulating the PP2A holoenzyme's substrate specificity, enzyme activity and cellular localization. Post-translationally, phosphorylation of either threonine (by autophosphorylation-activated protein kinase) or tyrosine results in inactivation of the phosphatase. Auto-dephosphorylation has been suggested as a mechanism for reactivation. Polyubiquitinated, leading to its degradation by the proteasome.

It is found in the cytoplasm. The protein localises to the nucleus. The protein resides in the chromosome. Its subcellular location is the centromere. It localises to the cytoskeleton. It is found in the spindle pole. It catalyses the reaction O-phospho-L-seryl-[protein] + H2O = L-seryl-[protein] + phosphate. It carries out the reaction O-phospho-L-threonyl-[protein] + H2O = L-threonyl-[protein] + phosphate. Its activity is regulated as follows. Inhibited by the interaction between PPP2R2A and ARPP19; this inhibition is enhanced when ARPP19 is phosphorylated. Inhibited by the interaction between PPP2R2A and PABIR1/FAM122A. Functionally, catalytic subunit of protein phosphatase 2A (PP2A), a serine/threonine phosphatase involved in the regulation of a wide variety of enzymes, signal transduction pathways, and cellular events. PP2A is the major phosphatase for microtubule-associated proteins (MAPs). PP2A can modulate the activity of phosphorylase B kinase casein kinase 2, mitogen-stimulated S6 kinase, and MAP-2 kinase. Cooperates with SGO2 to protect centromeric cohesin from separase-mediated cleavage in oocytes specifically during meiosis I. Can dephosphorylate various proteins, such as SV40 large T antigen, AXIN1, p53/TP53, PIM3, WEE1. Activates RAF1 by dephosphorylating it at 'Ser-259'. Mediates dephosphorylation of WEE1, preventing its ubiquitin-mediated proteolysis, increasing WEE1 protein levels, and promoting the G2/M checkpoint. Mediates dephosphorylation of MYC; promoting its ubiquitin-mediated proteolysis: interaction with AMBRA1 enhances interaction between PPP2CA and MYC. Mediates dephosphorylation of FOXO3; promoting its stabilization: interaction with AMBRA1 enhances interaction between PPP2CA and FOXO3. Catalyzes dephosphorylation of the pyrin domain of NLRP3, promoting assembly of the NLRP3 inflammasome. Together with RACK1 adapter, mediates dephosphorylation of AKT1 at 'Ser-473', preventing AKT1 activation and AKT-mTOR signaling pathway. Dephosphorylation of AKT1 is essential for regulatory T-cells (Treg) homeostasis and stability. Catalyzes dephosphorylation of PIM3, promotinh PIM3 ubiquitination and proteasomal degradation. Part of the striatin-interacting phosphatase and kinase (STRIPAK) complexes. STRIPAK complexes have critical roles in protein (de)phosphorylation and are regulators of multiple signaling pathways including Hippo, MAPK, nuclear receptor and cytoskeleton remodeling. Different types of STRIPAK complexes are involved in a variety of biological processes such as cell growth, differentiation, apoptosis, metabolism and immune regulation. Key mediator of a quality checkpoint during transcription elongation as part of the Integrator-PP2A (INTAC) complex. The INTAC complex drives premature transcription termination of transcripts that are unfavorably configured for transcriptional elongation: within the INTAC complex, PPP2CA catalyzes dephosphorylation of the C-terminal domain (CTD) of Pol II subunit POLR2A/RPB1 and SUPT5H/SPT5, thereby preventing transcriptional elongation. This is Serine/threonine-protein phosphatase 2A catalytic subunit alpha isoform (PPP2CA) from Homo sapiens (Human).